The chain runs to 170 residues: Inosine/xanthosine triphosphatase (170 aa).

The protein belongs to the YjjX NTPase family. In terms of assembly, homodimer. The cofactor is Mg(2+). Mn(2+) is required as a cofactor.

It carries out the reaction XTP + H2O = XDP + phosphate + H(+). The catalysed reaction is ITP + H2O = IDP + phosphate + H(+). In terms of biological role, phosphatase that hydrolyzes non-canonical purine nucleotides such as XTP and ITP to their respective diphosphate derivatives. Probably excludes non-canonical purines from DNA/RNA precursor pool, thus preventing their incorporation into DNA/RNA and avoiding chromosomal lesions. The chain is Inosine/xanthosine triphosphatase from Aliivibrio fischeri (strain MJ11) (Vibrio fischeri).